A 1270-amino-acid chain; its full sequence is Glycine betaine reductase ATRR (1270 aa).

An adenylation (A) domain region spans residues 14–418; the sequence is FTQQVRASPN…MIKLRGYSVV (405 aa). The Carrier domain occupies 528-605; it reads KEDPIGIEDI…GHLDTVRAIR (78 aa). O-(pantetheine 4'-phosphoryl)serine is present on Ser-565. Residues 643–937 form a carboxylic acid reductase domain R1 region; sequence KTVLLTGVTG…EPLSWDDWVA (295 aa). The segment at 1026–1256 is aldehyde reductase domain R2; sequence PLSGKVAVVT…IYALRQPEHV (231 aa).

It belongs to the NRP synthetase family.

Its activity is regulated as follows. The tetramethylammonium ion, which mimics the head group of glycine betaine, acts as a competitive inhibitor of ATRR A domain, whereas the potency decreased by three orders of magnitude with dimethylammonium. Choline is a mixed inhibitor for both glycine betaine reductase and aldehyde reductase activity but more potent in competition against glycine betaine in the first reduction step. Therefore, choline could act as a feedback inhibitor to regulate ATRR enzymatic activity. The lowered binding affinity of choline to R2 favors the release of choline after glycine betaine aldehyde reduction to avoid direct product inhibition. Functionally, NRPS-like enzyme with an unusual domain architecture that converts back glycine betaine to choline via a 2-step reduction mechanism, and thereby can be an alternative source of choline. Permits direct reutilization of endogenously stored glycine betaine for on-demand biosynthesis of choline and choline derivatives, including phospholipid phosphatidylcholine (PC) which has an essential role in maintaining membrane integrity and functionality, or choline-O-sulfate, a mean for intracellular sulfate storage. Glycine betaine is activated by the adenylation (A) domain, and transferred to the thiolation (T) domain. Movement of the phosphopantetheine arm to the thioester reductase domain R1 then allows thioester reduction by NADPH of glycine betainoyl thioester to glycine betaine aldehyde, which is in turn reduced to choline by the aldehyde reductase domain R2. The protein is Glycine betaine reductase ATRR of Emericella nidulans (strain FGSC A4 / ATCC 38163 / CBS 112.46 / NRRL 194 / M139) (Aspergillus nidulans).